The chain runs to 183 residues: ATP synthase subunit delta (183 aa).

This sequence belongs to the ATPase delta chain family. F-type ATPases have 2 components, F(1) - the catalytic core - and F(0) - the membrane proton channel. F(1) has five subunits: alpha(3), beta(3), gamma(1), delta(1), epsilon(1). F(0) has three main subunits: a(1), b(2) and c(10-14). The alpha and beta chains form an alternating ring which encloses part of the gamma chain. F(1) is attached to F(0) by a central stalk formed by the gamma and epsilon chains, while a peripheral stalk is formed by the delta and b chains.

Its subcellular location is the cell inner membrane. Its function is as follows. F(1)F(0) ATP synthase produces ATP from ADP in the presence of a proton or sodium gradient. F-type ATPases consist of two structural domains, F(1) containing the extramembraneous catalytic core and F(0) containing the membrane proton channel, linked together by a central stalk and a peripheral stalk. During catalysis, ATP synthesis in the catalytic domain of F(1) is coupled via a rotary mechanism of the central stalk subunits to proton translocation. In terms of biological role, this protein is part of the stalk that links CF(0) to CF(1). It either transmits conformational changes from CF(0) to CF(1) or is implicated in proton conduction. The protein is ATP synthase subunit delta of Nitratidesulfovibrio vulgaris (strain DSM 19637 / Miyazaki F) (Desulfovibrio vulgaris).